Consider the following 2104-residue polypeptide: Replication polyprotein (2104 aa).

The next 2 membrane-spanning stretches (helical) occupy residues L23–S43 and F70–I90. Positions V289–L313 form a coiled coil. The region spanning L329–D501 is the SF3 helicase domain. The segment at G1499–H1520 is viral peptidase. The RdRp catalytic domain maps to P1838–Y1965.

Specific enzymatic cleavages in vivo yield mature proteins.

It is found in the membrane. The enzyme catalyses RNA(n) + a ribonucleoside 5'-triphosphate = RNA(n+1) + diphosphate. Functionally, the peptidase activity is involved in polyprotein maturation, possibly along with hosts proteases. Transmembrane protein may be surface viral glycoprotein. RNA-directed RNA polymerase replicates the viral genome. This is Replication polyprotein from Drosophila melanogaster (Fruit fly).